The following is a 507-amino-acid chain: Mitochondrial antiviral-signaling protein (507 aa).

The Cytoplasmic portion of the chain corresponds to 1–482; sequence MTFAEEKTYK…PCASSVSWAK (482 aa). Residues K7 and K10 each participate in a glycyl lysine isopeptide (Lys-Gly) (interchain with G-Cter in ubiquitin) cross-link. In terms of domain architecture, CARD spans 10–77; it reads KYIRYNHSKF…WVEVFIRALR (68 aa). The tract at residues 10-77 is required for interaction with NLRX1; the sequence is KYIRYNHSKF…WVEVFIRALR (68 aa). Residue C79 is the site of S-palmitoyl cysteine attachment. 3 disordered regions span residues 123–238, 250–326, and 350–401; these read FAAG…TNLS, TTLS…NIAP, and ASAS…SKPG. The segment at 143 to 147 is interaction with TRAF2; it reads PVQDT. A phosphoserine mark is found at S152, S157, S172, S178, S186, and S220. Positions 153–158 are interaction with TRAF6; the sequence is PVENSE. At R234 the chain carries Asymmetric dimethylarginine. Composition is skewed to low complexity over residues 250–266 and 281–293; these read TTLSSSSTGSAFAKGAG and VPTNSVTTSSVPS. Residue S256 is modified to Phosphoserine. Residues 300–325 show a composition bias toward polar residues; it reads NTMSSKLPISTKSTAATPSTVPTNIA. A Glycyl lysine isopeptide (Lys-Gly) (interchain with G-Cter in ubiquitin) cross-link involves residue K305. Positions 340–507 are interaction with DHX33; the sequence is PSKVTASVAK…MLYRSRHLAQ (168 aa). The segment covering 359 to 368 has biased composition (basic and acidic residues); the sequence is RNNKQAKETL. A compositionally biased stretch (polar residues) spans 374 to 391; sequence VVTTGSSLTRPDISSRSL. S387 carries the phosphoserine modification. The pLxIS motif motif lies at 419–422; sequence LAIS. Position 422 is a phosphoserine; by TBK1 (S422). The disordered stretch occupies residues 423 to 474; it reads PSTSLGSEPNHGPEENEYSSFRIQVDKSPSVDLLGSPEPLATQQSPEEEEPC. The tract at residues 435–440 is interaction with TRAF6; it reads PEENEY. The helical transmembrane segment at 483-500 threads the bilayer; that stretch reads WLGATSALLAAFLAVMLY. At 501–507 the chain is on the mitochondrial intermembrane side; sequence RSRHLAQ.

In terms of assembly, self-associates and polymerizes (via CARD domains) to form 400 nM long three-stranded helical filaments on mitochondria, filament nucleation requires interaction with RIGI whose CARD domains act as a template for filament assembly. Interacts with RIGI, IFIH1/MDA5, TRAF2, TRAF6 and C1QBP. May interact with FADD, RIPK1, CHUK and IKBKB. Interacts (when phosphorylated) with IRF3; following activation and phosphorylation on the pLxIS motif by TBK1, recruits IRF3. Interacts with NLRX1. Interaction with NLRX1 requires the CARD domain. Interacts with PSMA7. Interacts with TRAFD1. Interacts (via C-terminus) with PCBP2 in a complex containing MAVS/IPS1, PCBP2 and ITCH. Interacts with CYLD. Interacts with SRC. Interacts with DHX58/LGP2 and IKBKE. Interacts with STING1. Interacts with IFIT3 (via N-terminus). Interacts with TBK1 only in the presence of IFIT3. Interacts with TTLL12; the interaction prevents MAVS binding to TBK1 and IKBKE. Interacts with MUL1. Interacts with ANKRD17. Interacts with NDFIP1. Interacts with SMURF1; the interaction is mediated by NDFIP1 and leads to MAVS ubiquitination and degradation. Interacts with UBXN1; this interaction inhibits MAVS-mediated antiviral pathway. Interacts (via C-terminus) with GPATCH3; the interaction is markedly increased upon viral infection. Directly interacts (via CARD domain) with ATG5 and ATG12, either as ATG5 and ATG12 monomers or as ATG12-ATG5 conjugates. Interacts with DHX33 (via the helicase C-terminal domain). Interacts with DDX3X (via C-terminus); this interaction may occur rapidly, but transiently after viral infection. The interaction with DDX3X potentiates MAVS-mediated IFNB induction. Conversely inhibition of this interaction prevents MAVS-mediated IFNB induction. Transiently interacts with TRAF3 early during viral infection. Interacts with CLPB. Interacts with TRAF3IP3. Interacts with TOMM70; the interaction is enhanced by virus infection. Interacts with ZNFX1. Interacts with DHX15. Interacts with N4BP3; this interaction promotes the polyubiquitination of MAVS. Interacts with TAX1BP1; this interaction induces MAVS polyubiquitination. Interacts with NLRP3; promoting NLRP3 recruitment to mitochondria and activation of the NLRP3 inflammasome. Interacts with ECSIT; this interaction bridges RIGI to the MAVS complex at the mitochondrion. Interacts with UBL7; this interaction promotes MAVS 'Lys-27'-linked ubiquitination leading to type I interferon production. Interacts (via transmembrane domain) with SMIM30/MAVI1 (via transmembrane domain); the interaction disrupts MAVS interaction with RIGI and inhibits MAVS aggregation, resulting in the repression of type I interferon signaling and innate immune responses. Following activation, phosphorylated by TBK1 at Ser-422 in the pLxIS motif. The phosphorylated pLxIS motif constitutes an IRF3-binding motif, leading to recruitment of the transcription factor IRF3 to induce type-I interferons and other cytokines. In terms of processing, ubiquitinated. Undergoes 'Lys-48'-linked polyubiquitination catalyzed by ITCH; ITCH-dependent polyubiquitination is mediated by the interaction with PCBP2 and leads to MAVS/IPS1 proteasomal degradation. Ubiquitinated by RNF125, leading to its degradation by the proteasome. Undergoes 'Lys-48'-linked ubiquitination catalyzed by SMURF1. Undergoes 'Lys-48'-linked ubiquitination catalyzed by MARCHF5 at Lys-7, leading to proteasomal degradation. Ubiquitinated via 'Lys-63'-linked ubiquitination at Lys-10 by TRIM31, promoting MAVS polymerization and formation of three-stranded helical filaments on mitochondria. Undergoes 'Lys-63'-linked ubiquitination leading to enhanced interaction between MAVS and TRAF2. Undergoes 'Lys-27'-linked ubiquitination by UBE2N and TRIM21 leading to enhanced interaction between MAVS and TBK1. Deubiquitinated by USP10 leading to attenuation of RIGI-mediated MAVS aggregation and production of type I interferon. Undergoes 'Lys-48'-linked polyubiquitination catalyzed by RNF115 leading to its degradation. Post-translationally, proteolytically cleaved by apoptotic caspases during apoptosis, leading to its inactivation. Cleavage by CASP3 during virus-induced apoptosis inactivates it, preventing cytokine overproduction. Palmitoylated by ZHDDC4. Palmitoylation promotes MAVS stabilization and activation by inhibiting 'Lys-48'- but facilitating 'Lys-63'-linked ubiquitination.

The protein resides in the mitochondrion outer membrane. It localises to the mitochondrion. The protein localises to the peroxisome. Its function is as follows. Adapter required for innate immune defense against viruses. Acts downstream of DHX33, RIGI and IFIH1/MDA5, which detect intracellular dsRNA produced during viral replication, to coordinate pathways leading to the activation of NF-kappa-B, IRF3 and IRF7, and to the subsequent induction of antiviral cytokines such as IFN-beta and RANTES (CCL5). Peroxisomal and mitochondrial MAVS act sequentially to create an antiviral cellular state. Upon viral infection, peroxisomal MAVS induces the rapid interferon-independent expression of defense factors that provide short-term protection, whereas mitochondrial MAVS activates an interferon-dependent signaling pathway with delayed kinetics, which amplifies and stabilizes the antiviral response. May activate the same pathways following detection of extracellular dsRNA by TLR3. May protect cells from apoptosis. Involved in NLRP3 inflammasome activation by mediating NLRP3 recruitment to mitochondria. In Rattus norvegicus (Rat), this protein is Mitochondrial antiviral-signaling protein (Mavs).